The chain runs to 274 residues: 2,3,4,5-tetrahydropyridine-2,6-dicarboxylate N-succinyltransferase (274 aa).

Arg-106 and Asp-143 together coordinate substrate.

This sequence belongs to the transferase hexapeptide repeat family. In terms of assembly, homotrimer.

It is found in the cytoplasm. The catalysed reaction is (S)-2,3,4,5-tetrahydrodipicolinate + succinyl-CoA + H2O = (S)-2-succinylamino-6-oxoheptanedioate + CoA. It functions in the pathway amino-acid biosynthesis; L-lysine biosynthesis via DAP pathway; LL-2,6-diaminopimelate from (S)-tetrahydrodipicolinate (succinylase route): step 1/3. The chain is 2,3,4,5-tetrahydropyridine-2,6-dicarboxylate N-succinyltransferase from Rickettsia rickettsii (strain Sheila Smith).